We begin with the raw amino-acid sequence, 113 residues long: UPF0060 membrane protein CV_3485 (113 aa).

The next 4 membrane-spanning stretches (helical) occupy residues 12–32, 37–57, 67–87, and 91–111; these read GLFV…WLVL, SLWL…LLTL, AAYG…VDGV, and RWDA…MLAP.

This sequence belongs to the UPF0060 family.

Its subcellular location is the cell inner membrane. The sequence is that of UPF0060 membrane protein CV_3485 from Chromobacterium violaceum (strain ATCC 12472 / DSM 30191 / JCM 1249 / CCUG 213 / NBRC 12614 / NCIMB 9131 / NCTC 9757 / MK).